A 152-amino-acid chain; its full sequence is TRAPP-associated protein TCA17 (152 aa).

It belongs to the TRAPP small subunits family. Sedlin subfamily. As to quaternary structure, interacts with the TRAPP II complex; TRAPP II subunits TRS33 and TRS65 are required for this interaction.

Its subcellular location is the golgi apparatus. It is found in the trans-Golgi network. Its function is as follows. Required, together with the TRAPP II subunit TRS33, for TRAPP II complex assembly or stability, and for proper Golgi localization of TRAPP and the Rab GTPase YPT31. This chain is TRAPP-associated protein TCA17 (TCA17), found in Saccharomyces cerevisiae (strain ATCC 204508 / S288c) (Baker's yeast).